The primary structure comprises 372 residues: Aryl-hydrocarbon-interacting protein-like 1 (372 aa).

The region spanning 53–145 is the PPIase FKBP-type domain; sequence REVGQPMHII…DLDELQKEPQ (93 aa). TPR repeat units lie at residues 178 to 211, 230 to 263, and 264 to 297; these read VPVLHGEGNRLFKLGRYEEASSKYQEAIICLRNL, NTLILNYCQCLLKKEEYYEVLEHTSDILRHHPGI, and VKAYYVRARAHAEVWNEAEAKADLQKVLELEPSM. Residues 325–372 form a disordered region; sequence NMLSQGATWSPAEPPAEPPAESSTEPPAEPPAEPPAELTLTPGHPLQH.

In terms of assembly, interacts with NUB1.

The protein localises to the cytoplasm. Its subcellular location is the nucleus. Its function is as follows. May be important in protein trafficking and/or protein folding and stabilization. In Saimiri boliviensis boliviensis (Bolivian squirrel monkey), this protein is Aryl-hydrocarbon-interacting protein-like 1 (AIPL1).